Reading from the N-terminus, the 261-residue chain is Kallikrein 1-related peptidase b9 (261 aa).

Positions 1–18 are cleaved as a signal peptide; sequence MRFLILFLALSLGGIDAA. Residues 19-24 constitute a propeptide, activation peptide; the sequence is PPVHSR. In terms of domain architecture, Peptidase S1 spans 25–258; it reads IVGGFKCEKN…FTSWIKDTMA (234 aa). Disulfide bonds link C31–C173, C50–C66, C152–C219, C184–C198, and C209–C234. Catalysis depends on H65, which acts as the Charge relay system. Residue N102 is glycosylated (N-linked (GlcNAc...) asparagine). Catalysis depends on D120, which acts as the Charge relay system. S213 serves as the catalytic Charge relay system.

It belongs to the peptidase S1 family. Kallikrein subfamily.

The enzyme catalyses Preferential cleavage of Arg-|-Xaa bonds in small molecule substrates. Highly selective action to release kallidin (lysyl-bradykinin) from kininogen involves hydrolysis of Met-|-Xaa or Leu-|-Xaa.. Glandular kallikreins cleave Met-Lys and Arg-Ser bonds in kininogen to release Lys-bradykinin. This is Kallikrein 1-related peptidase b9 (Klk1b9) from Mus musculus (Mouse).